The following is a 407-amino-acid chain: Argininosuccinate synthase (407 aa).

Position 10-18 (10-18 (AYSGGLDTS)) interacts with ATP. L-citrulline-binding residues include Y88 and S93. G118 is an ATP binding site. The L-aspartate site is built by T120, N124, and D125. Residue N124 coordinates L-citrulline. 5 residues coordinate L-citrulline: R128, S177, S186, E263, and Y275.

The protein belongs to the argininosuccinate synthase family. Type 1 subfamily. Homotetramer.

It is found in the cytoplasm. It catalyses the reaction L-citrulline + L-aspartate + ATP = 2-(N(omega)-L-arginino)succinate + AMP + diphosphate + H(+). Its pathway is amino-acid biosynthesis; L-arginine biosynthesis; L-arginine from L-ornithine and carbamoyl phosphate: step 2/3. The polypeptide is Argininosuccinate synthase (Clostridium botulinum (strain Eklund 17B / Type B)).